We begin with the raw amino-acid sequence, 212 residues long: MSEHPLPASVAATLEQGLASMGLDAALAPPLLRYLALLHRWNGTYNLTAIRDPQEMVTRHLLDSLAMQPFVADGSLADLGTGPGLPGIPLAIACPGLQVTLVESNGKKARFMREAVRQLGLGNARVAESRAEALDEAGHYDQLTARAMDTLAGIVRVGGHLLRPGGVLLAMKGVYPHEEIAELPAGWQVREVTPLSVPGLAGERHLVTVTGP.

S-adenosyl-L-methionine-binding positions include Gly80, Leu85, 131-132, and Arg146; that span reads AE.

The protein belongs to the methyltransferase superfamily. RNA methyltransferase RsmG family.

It is found in the cytoplasm. It carries out the reaction guanosine(527) in 16S rRNA + S-adenosyl-L-methionine = N(7)-methylguanosine(527) in 16S rRNA + S-adenosyl-L-homocysteine. Functionally, specifically methylates the N7 position of guanine in position 527 of 16S rRNA. The sequence is that of Ribosomal RNA small subunit methyltransferase G from Stenotrophomonas maltophilia (strain R551-3).